The chain runs to 426 residues: D-tagatose-1,6-bisphosphate aldolase subunit KbaZ (426 aa).

This sequence belongs to the GatZ/KbaZ family. KbaZ subfamily. In terms of assembly, forms a complex with KbaY.

It participates in carbohydrate metabolism; D-tagatose 6-phosphate degradation; D-glyceraldehyde 3-phosphate and glycerone phosphate from D-tagatose 6-phosphate: step 2/2. Component of the tagatose-1,6-bisphosphate aldolase KbaYZ that is required for full activity and stability of the Y subunit. Could have a chaperone-like function for the proper and stable folding of KbaY. When expressed alone, KbaZ does not show any aldolase activity. In Escherichia coli O139:H28 (strain E24377A / ETEC), this protein is D-tagatose-1,6-bisphosphate aldolase subunit KbaZ.